Here is a 103-residue protein sequence, read N- to C-terminus: MHLQLQYCLILAAALFCIGIYGLITSRNAVRVLMSIELLLNAVNLNLMGFSNYLDPSNIRGQVFAIFVITIAAAEAAVGLAIVLAIYRNRETTDMEQFNLLKW.

3 helical membrane passes run 5–25 (LQYC…GLIT), 32–52 (VLMS…GFSN), and 66–86 (IFVI…VLAI).

This sequence belongs to the complex I subunit 4L family. As to quaternary structure, NDH-1 can be composed of about 15 different subunits; different subcomplexes with different compositions have been identified which probably have different functions.

Its subcellular location is the cellular thylakoid membrane. It carries out the reaction a plastoquinone + NADH + (n+1) H(+)(in) = a plastoquinol + NAD(+) + n H(+)(out). The enzyme catalyses a plastoquinone + NADPH + (n+1) H(+)(in) = a plastoquinol + NADP(+) + n H(+)(out). In terms of biological role, NDH-1 shuttles electrons from an unknown electron donor, via FMN and iron-sulfur (Fe-S) centers, to quinones in the respiratory and/or the photosynthetic chain. The immediate electron acceptor for the enzyme in this species is believed to be plastoquinone. Couples the redox reaction to proton translocation, and thus conserves the redox energy in a proton gradient. Cyanobacterial NDH-1 also plays a role in inorganic carbon-concentration. The polypeptide is NAD(P)H-quinone oxidoreductase subunit 4L (Synechocystis sp. (strain ATCC 27184 / PCC 6803 / Kazusa)).